The primary structure comprises 711 residues: Glycine--tRNA ligase beta subunit (711 aa).

The protein belongs to the class-II aminoacyl-tRNA synthetase family. As to quaternary structure, tetramer of two alpha and two beta subunits.

Its subcellular location is the cytoplasm. It carries out the reaction tRNA(Gly) + glycine + ATP = glycyl-tRNA(Gly) + AMP + diphosphate. This chain is Glycine--tRNA ligase beta subunit, found in Polaromonas naphthalenivorans (strain CJ2).